The chain runs to 516 residues: Oxysterol-binding protein-like protein 1 (516 aa).

2 disordered regions span residues 168–240 and 459–501; these read PLGK…SQKS and KQEI…EEGK. Residues 178–187 show a composition bias toward polar residues; the sequence is SRTTSSQSVA. Position 182 is a phosphoserine (Ser-182). Basic residues predominate over residues 197-206; the sequence is TSKKKSSKKN. Over residues 218–238 the composition is skewed to polar residues; sequence DRSSTAPSTAESNNEHLSSSQ.

It belongs to the OSBP family.

It is found in the endoplasmic reticulum. This is Oxysterol-binding protein-like protein 1 (obp1) from Schizosaccharomyces pombe (strain 972 / ATCC 24843) (Fission yeast).